Here is a 58-residue protein sequence, read N- to C-terminus: Large ribosomal subunit protein uL30 (58 aa).

This sequence belongs to the universal ribosomal protein uL30 family. In terms of assembly, part of the 50S ribosomal subunit.

This Pseudomonas fluorescens (strain ATCC BAA-477 / NRRL B-23932 / Pf-5) protein is Large ribosomal subunit protein uL30.